Here is a 521-residue protein sequence, read N- to C-terminus: Anthranilate synthase component 1 (521 aa).

Residues T40 and 292–294 (PYM) each bind L-tryptophan. 329–330 (GT) provides a ligand contact to chorismate. Mg(2+) is bound at residue E362. Chorismate-binding positions include Y450, R470, 484–486 (GAG), and G486. Residue E499 participates in Mg(2+) binding.

This sequence belongs to the anthranilate synthase component I family. Heterotetramer consisting of two non-identical subunits: a beta subunit (TrpG) and a large alpha subunit (TrpE). Mg(2+) serves as cofactor.

It catalyses the reaction chorismate + L-glutamine = anthranilate + pyruvate + L-glutamate + H(+). The protein operates within amino-acid biosynthesis; L-tryptophan biosynthesis; L-tryptophan from chorismate: step 1/5. With respect to regulation, feedback inhibited by tryptophan. Its function is as follows. Part of a heterotetrameric complex that catalyzes the two-step biosynthesis of anthranilate, an intermediate in the biosynthesis of L-tryptophan. In the first step, the glutamine-binding beta subunit (TrpG) of anthranilate synthase (AS) provides the glutamine amidotransferase activity which generates ammonia as a substrate that, along with chorismate, is used in the second step, catalyzed by the large alpha subunit of AS (TrpE) to produce anthranilate. In the absence of TrpG, TrpE can synthesize anthranilate directly from chorismate and high concentrations of ammonia. In Buchnera aphidicola subsp. Acyrthosiphon pisum (strain APS) (Acyrthosiphon pisum symbiotic bacterium), this protein is Anthranilate synthase component 1 (trpE).